The primary structure comprises 810 residues: MKISVNWLKEFVPSLSFDCSGLVDYLTFLGLEVEDVFEQKLPDQKVIVGKIVEVRPHPNADRLRICMVDTGEGELRQIVCGAPNVEAGMMVPVATIGAVLTAVSGETFTIKPAKIRGEHSSGMICAADELGLSDDHDGVMVLDEACEIGQPLARYLETDTVLDIAVTPNRPDALSHLGVARELADCNEIVYPQAPVIEFTRGGGLIEVQDEESCPYYTATVIKGVTVGPSPRWLARRLEQIGLRPKNNIVDITNYILHSFGQPLHAFDYHQLAGSRIVVRSDAESSFMALNKVEYQLQPGMTVVCDAREPVAIGGVMGGLHSAVTDKTTDILLEAAYFNPASVRKTAKQLQLSSDSSYRFERGVDPCNVKRAAEYAIAMILEIAGGNVDSAEAWGDMPAAQKIVSLRPKRVNAVLGSSITASRMVRLLEKICIKAVSQEAVSDDVDSIAFSVPSFRVDIEQEIDLIEEVARLYGYNNLEPAPVMVSSYPVSRKVPEYFPDYLRSIMIGLNFREVLTNPLIRKAEADCFSSMLVNVLNPISEELEVLRPNLAPSLLKVVGYNMRHGNRELRLFEVAHGFEKQPEAGRGNEGPLSAFLEKELLSMVITGRREPRSWNRQDENVDFYDLRGVVEMLLEKLNLLEKSAFNIYNARTIGIEITSTENGKTSVLKAGTVQQVNREVLDVFGLDQDVYLAELDVTLLERCFESGVIYEPPSKFPVVERDLSFVLPRHIPAQRLIDLAKASDPRVRSVRIFDVFDRGTTQGEPSTRSVALSLELADRSGTMNEEAISAVISKVIDNARSELGAVIRQV.

In terms of domain architecture, tRNA-binding spans 40-153 (KLPDQKVIVG…EACEIGQPLA (114 aa)). One can recognise a B5 domain in the interval 399 to 480 (AAQKIVSLRP…RLYGYNNLEP (82 aa)). Mg(2+) contacts are provided by aspartate 458, aspartate 464, glutamate 467, and glutamate 468. Positions 714-808 (SKFPVVERDL…ARSELGAVIR (95 aa)) constitute an FDX-ACB domain.

It belongs to the phenylalanyl-tRNA synthetase beta subunit family. Type 1 subfamily. Tetramer of two alpha and two beta subunits. Requires Mg(2+) as cofactor.

The protein resides in the cytoplasm. The enzyme catalyses tRNA(Phe) + L-phenylalanine + ATP = L-phenylalanyl-tRNA(Phe) + AMP + diphosphate + H(+). The sequence is that of Phenylalanine--tRNA ligase beta subunit from Chlorobaculum tepidum (strain ATCC 49652 / DSM 12025 / NBRC 103806 / TLS) (Chlorobium tepidum).